Reading from the N-terminus, the 176-residue chain is Zinc finger A20 and AN1 domain-containing stress-associated protein 9 (176 aa).

Residues 16–50 (ASEPKLCVKGCGFFGSPSNMDLCSKCYRGICAEEA) form an A20-type zinc finger. Zn(2+) contacts are provided by C22, C26, C38, C41, C117, C120, C131, C133, C138, H141, H147, and C149. An AN1-type zinc finger spans residues 111-157 (PARTNRCLCCNKKVGIMGFKCKCGSTFCGEHRYPETHDCSFDFKEVG).

Functionally, may be involved in environmental stress response. The chain is Zinc finger A20 and AN1 domain-containing stress-associated protein 9 (SAP9) from Arabidopsis thaliana (Mouse-ear cress).